We begin with the raw amino-acid sequence, 1054 residues long: Probable sucrose-phosphate synthase 1 (1054 aa).

The segment covering 104 to 115 (RLERERGRREAV) has biased composition (basic and acidic residues). Disordered regions lie at residues 104–125 (RLER…LSEG), 674–693 (LRNE…SDSL), and 708–727 (DGDK…DDRA).

This sequence belongs to the glycosyltransferase 1 family. As to quaternary structure, homodimer or homotetramer.

It catalyses the reaction beta-D-fructose 6-phosphate + UDP-alpha-D-glucose = sucrose 6(F)-phosphate + UDP + H(+). It participates in glycan biosynthesis; sucrose biosynthesis; sucrose from D-fructose 6-phosphate and UDP-alpha-D-glucose: step 1/2. With respect to regulation, activity is regulated by phosphorylation and moderated by concentration of metabolites and light. In terms of biological role, plays a role in photosynthetic sucrose synthesis by catalyzing the rate-limiting step of sucrose biosynthesis from UDP-glucose and fructose- 6-phosphate. Involved in the regulation of carbon partitioning in the leaves of plants. May regulate the synthesis of sucrose and therefore play a major role as a limiting factor in the export of photoassimilates out of the leaf. Plays a role for sucrose availability that is essential for plant growth and fiber elongation. The chain is Probable sucrose-phosphate synthase 1 (SPS1) from Craterostigma plantagineum (Blue gem).